The primary structure comprises 286 residues: ATP synthase gamma chain (286 aa).

The protein belongs to the ATPase gamma chain family. In terms of assembly, F-type ATPases have 2 components, CF(1) - the catalytic core - and CF(0) - the membrane proton channel. CF(1) has five subunits: alpha(3), beta(3), gamma(1), delta(1), epsilon(1). CF(0) has three main subunits: a, b and c.

It localises to the cell inner membrane. Functionally, produces ATP from ADP in the presence of a proton gradient across the membrane. The gamma chain is believed to be important in regulating ATPase activity and the flow of protons through the CF(0) complex. The protein is ATP synthase gamma chain of Pseudoalteromonas atlantica (strain T6c / ATCC BAA-1087).